A 438-amino-acid chain; its full sequence is Cobyrinate a,c-diamide synthase (438 aa).

Residues 242–426 (TIAIARDAAF…FHAYFSSCPA (185 aa)) form the GATase cobBQ-type domain. Catalysis depends on cysteine 325, which acts as the Nucleophile.

This sequence belongs to the CobB/CbiA family. The cofactor is Mg(2+).

The catalysed reaction is cob(II)yrinate + 2 L-glutamine + 2 ATP + 2 H2O = cob(II)yrinate a,c diamide + 2 L-glutamate + 2 ADP + 2 phosphate + 2 H(+). It participates in cofactor biosynthesis; adenosylcobalamin biosynthesis; cob(II)yrinate a,c-diamide from sirohydrochlorin (anaerobic route): step 10/10. In terms of biological role, catalyzes the ATP-dependent amidation of the two carboxylate groups at positions a and c of cobyrinate, using either L-glutamine or ammonia as the nitrogen source. The sequence is that of Cobyrinate a,c-diamide synthase from Herminiimonas arsenicoxydans.